Reading from the N-terminus, the 449-residue chain is XK-related protein 2 (449 aa).

Transmembrane regions (helical) follow at residues 35-55 (FSIL…LYMV), 68-88 (TYTF…LIFV), 98-118 (LSLF…EAMI), 174-194 (IQAF…SLIS), 202-222 (VVLM…CNML), 241-261 (LCIT…LVLF), 269-289 (AVPF…IKFW), 306-326 (VGTL…NFSC), 357-377 (LVEN…VLLN), and 382-402 (LIAL…LLFF).

Belongs to the XK family. As to expression, expressed predominantly in the placenta, in syncytiotrophoblasts. Moderate levels in the adrenal gland, low levels in the trachea and very low levels in the bone marrow.

It localises to the cell membrane. This Homo sapiens (Human) protein is XK-related protein 2 (XKRX).